An 87-amino-acid polypeptide reads, in one-letter code: Small ribosomal subunit protein bS20 (87 aa).

The tract at residues 1-25 (MANIKSAKKRAVQSEKRRKHNASRR) is disordered.

The protein belongs to the bacterial ribosomal protein bS20 family.

Binds directly to 16S ribosomal RNA. The chain is Small ribosomal subunit protein bS20 from Yersinia pseudotuberculosis serotype O:1b (strain IP 31758).